Consider the following 1032-residue polypeptide: Serine/threonine-protein kinase ppk31 (1032 aa).

Residues 3–72 form the PAS domain; it reads NPEQLKRILS…KATDNLFRKS (70 aa). In terms of domain architecture, Protein kinase spans 528-877; that stretch reads FILLKEINRG…YQEIKKHPFF (350 aa). Residues 534–542 and Lys557 each bind ATP; that span reads INRGAYGRV. Catalysis depends on Asp652, which acts as the Proton acceptor. Positions 938–963 are disordered; sequence PKATPADSGTETSNSAAFSASEEETT. A compositionally biased stretch (low complexity) spans 947 to 957; it reads TETSNSAAFSA.

This sequence belongs to the protein kinase superfamily. Ser/Thr protein kinase family.

The protein localises to the cytoplasm. The catalysed reaction is L-seryl-[protein] + ATP = O-phospho-L-seryl-[protein] + ADP + H(+). The enzyme catalyses L-threonyl-[protein] + ATP = O-phospho-L-threonyl-[protein] + ADP + H(+). Has a role in meiosis. This chain is Serine/threonine-protein kinase ppk31 (ppk31), found in Schizosaccharomyces pombe (strain 972 / ATCC 24843) (Fission yeast).